Here is a 1299-residue protein sequence, read N- to C-terminus: Phosphoribosylformylglycinamidine synthase (1299 aa).

ATP is bound by residues 310 to 321 (GAATGAGGEIRD), 389 to 391 (TGY), and A680. D681, E720, N724, and D888 together coordinate Mg(2+). S890 is an ATP binding site. The 254-residue stretch at 1046–1299 (VAVLREQGVN…MFRNARVWLG (254 aa)) folds into the Glutamine amidotransferase type-1 domain. C1139 serves as the catalytic Nucleophile. Catalysis depends on residues H1264 and E1266.

In the N-terminal section; belongs to the FGAMS family. In terms of assembly, monomer.

It localises to the cytoplasm. It carries out the reaction N(2)-formyl-N(1)-(5-phospho-beta-D-ribosyl)glycinamide + L-glutamine + ATP + H2O = 2-formamido-N(1)-(5-O-phospho-beta-D-ribosyl)acetamidine + L-glutamate + ADP + phosphate + H(+). It participates in purine metabolism; IMP biosynthesis via de novo pathway; 5-amino-1-(5-phospho-D-ribosyl)imidazole from N(2)-formyl-N(1)-(5-phospho-D-ribosyl)glycinamide: step 1/2. Phosphoribosylformylglycinamidine synthase involved in the purines biosynthetic pathway. Catalyzes the ATP-dependent conversion of formylglycinamide ribonucleotide (FGAR) and glutamine to yield formylglycinamidine ribonucleotide (FGAM) and glutamate. This chain is Phosphoribosylformylglycinamidine synthase, found in Myxococcus xanthus (strain DK1622).